The following is a 108-amino-acid chain: uncharacterized protein (108 aa).

This is an uncharacterized protein from Autographa californica nuclear polyhedrosis virus (AcMNPV).